The following is a 308-amino-acid chain: Zinc transporter ZIP9 (308 aa).

Residues F4 to I24 form a helical membrane-spanning segment. N29 carries an N-linked (GlcNAc...) asparagine glycan. The next 5 membrane-spanning stretches (helical) occupy residues L35 to V55, A107 to G127, I147 to A167, L177 to F197, and H211 to S231. N-linked (GlcNAc...) asparagine glycosylation is present at N242. Helical transmembrane passes span G245–P265 and L287–Q307.

This sequence belongs to the ZIP transporter (TC 2.A.5) family.

The protein localises to the golgi apparatus. It is found in the trans-Golgi network membrane. The protein resides in the cell membrane. Its subcellular location is the cytoplasm. It localises to the perinuclear region. The protein localises to the mitochondrion. It is found in the nucleus. It catalyses the reaction Zn(2+)(in) = Zn(2+)(out). Its function is as follows. Transports zinc ions across cell and organelle membranes into the cytoplasm and regulates intracellular zinc homeostasis. Participates in the zinc ions efflux out of the secretory compartments. Regulates intracellular zinc level, resulting in the enhancement of AKT1 and MAPK3/MAPK1 (Erk1/2) phosphorylation in response to the BCR activation. Also functions as a membrane androgen receptor that mediates, through a G protein, the non-classical androgen signaling pathway, characterized by the activation of MAPK3/MAPK1 (Erk1/2) and transcription factors CREB1 or ATF1. This pathway contributes to CLDN1 and CLDN5 expression and tight junction formation between adjacent Sertoli cells. Mediates androgen-induced vascular endothelial cell proliferation through activation of an inhibitory G protein leading to the AKT1 and MAPK3/MAPK1 (Erk1/2) activation which in turn modulate inhibition (phosphorylation) of GSK3B and CCND1 transcription. Moreover, has dual functions as a membrane-bound androgen receptor and as an androgen-dependent zinc transporter both of which are mediated through an inhibitory G protein (Gi) that mediates both MAP kinase and zinc signaling leading to the androgen-dependent apoptotic process. This Mus musculus (Mouse) protein is Zinc transporter ZIP9.